The chain runs to 107 residues: Ferredoxin 1 (107 aa).

2 4Fe-4S ferredoxin-type domains span residues 2-30 (TFVV…YEGP) and 31-60 (NFLV…SEDE). [3Fe-4S] cluster-binding residues include C9 and C17. Residues C21, C40, C43, and C46 each coordinate [4Fe-4S] cluster. C50 serves as a coordination point for [3Fe-4S] cluster.

[4Fe-4S] cluster serves as cofactor. The cofactor is [3Fe-4S] cluster.

Its function is as follows. Ferredoxins are iron-sulfur proteins that transfer electrons in a wide variety of metabolic reactions. The protein is Ferredoxin 1 (fdxA) of Pseudomonas putida (strain ATCC 47054 / DSM 6125 / CFBP 8728 / NCIMB 11950 / KT2440).